A 252-amino-acid polypeptide reads, in one-letter code: Ribonuclease 3 (252 aa).

Residues 3–125 (LATLETRLDH…IFGAAFLDGG (123 aa)) enclose the RNase III domain. E38 lines the Mg(2+) pocket. D42 is a catalytic residue. Residues D111 and E114 each contribute to the Mg(2+) site. E114 is an active-site residue. The region spanning 152 to 222 (DAKTLLQEFL…AKLALEAAQA (71 aa)) is the DRBM domain.

It belongs to the ribonuclease III family. In terms of assembly, homodimer. The cofactor is Mg(2+).

The protein localises to the cytoplasm. The catalysed reaction is Endonucleolytic cleavage to 5'-phosphomonoester.. Functionally, digests double-stranded RNA. Involved in the processing of primary rRNA transcript to yield the immediate precursors to the large and small rRNAs (23S and 16S). Processes some mRNAs, and tRNAs when they are encoded in the rRNA operon. Processes pre-crRNA and tracrRNA of type II CRISPR loci if present in the organism. This chain is Ribonuclease 3, found in Bordetella petrii (strain ATCC BAA-461 / DSM 12804 / CCUG 43448).